Consider the following 478-residue polypeptide: MSAPLLKLGAVLSTMAMISNWMSQTLPSLVGLNTTRLSAPDTLTQISPKEGWQVYSSAQDPDGRCICTVVAPEQNLCSRDAKSRQLRQLLEKVQNMSQSIEVLNLRTQRDFQYVLKMETQMKGLKAKFRQIEDDRKTLMTKHFQELKEKMDELLPLIPVLEQYKTDAKLITQFKEEIRNLSSVLTGIQEEIGAYDYEELHQRVLSLETRLRDCMKKLTCGKLMKITGPITVKTSGTRFGAWMTDPLASEKNNRVWYMDSYTNNKIVREYKSIADFVSGAESRTYNLPFKWAGTNHVVYNGSLYFNKYQSNIIIKYSFDLGRVLAQRSLEYAGFHNVYPYTWGGFSDIDLMADEIGLWAVYATNQNAGNIVISQLNQDTLEVMKSWSTGYPKRSAGESFMICGTLYVTNSHLTGAKVYYSYSTKTSTYEYTDIPFHNQYFHISMLDYNARDRALYAWNNGHQVLFNVTLFHIIKTEDDT.

A signal peptide spans 1–23; that stretch reads MSAPLLKLGAVLSTMAMISNWMS. 5 N-linked (GlcNAc...) asparagine glycosylation sites follow: asparagine 33, asparagine 95, asparagine 179, asparagine 299, and asparagine 465. Residues 77–217 are a coiled coil; that stretch reads CSRDAKSRQL…TRLRDCMKKL (141 aa). An Olfactomedin-like domain is found at 218 to 470; sequence TCGKLMKITG…QVLFNVTLFH (253 aa). An intrachain disulfide couples cysteine 219 to cysteine 401.

As to quaternary structure, peripherally associated with AMPAR complex. AMPAR complex consists of an inner core made of 4 pore-forming GluA/GRIA proteins (GRIA1, GRIA2, GRIA3 and GRIA4) and 4 major auxiliary subunits arranged in a twofold symmetry. One of the two pairs of distinct binding sites is occupied either by CNIH2, CNIH3 or CACNG2, CACNG3. The other harbors CACNG2, CACNG3, CACNG4, CACNG8 or GSG1L. This inner core of AMPAR complex is complemented by outer core constituents binding directly to the GluA/GRIA proteins at sites distinct from the interaction sites of the inner core constituents. Outer core constituents include at least PRRT1, PRRT2, CKAMP44/SHISA9, FRRS1L and NRN1. The proteins of the inner and outer core serve as a platform for other, more peripherally associated AMPAR constituents, including OLFM3. Alone or in combination, these auxiliary subunits control the gating and pharmacology of the AMPAR complex and profoundly impact their biogenesis and protein processing. Homodimer. Interacts with MYOC. Interacts with OLFM2. In terms of tissue distribution, expressed in the brain (at protein level). Also expressed in the retina, mainly in the ganglion cell layer and in the amacrine cell subregion of the inner nuclear layer. Expressed at high levels in the epithelial cells of the posterior iris and the ciliary body and, at lower levels, in the trabecular meshwork. Isoform 2 preferentially expressed in retina and brain, while isoform 1 preferentially expressed in the tissues of the eye angle.

The protein localises to the secreted. The protein resides in the synapse. In Rattus norvegicus (Rat), this protein is Noelin-3 (Olfm3).